Reading from the N-terminus, the 275-residue chain is Nitrogenase iron protein 1 (275 aa).

An ATP-binding site is contributed by 9 to 16; that stretch reads GKGGIGKS. C98 contacts [4Fe-4S] cluster. An ADP-ribosylarginine; by dinitrogenase reductase ADP-ribosyltransferase modification is found at R101. C132 lines the [4Fe-4S] cluster pocket.

It belongs to the NifH/BchL/ChlL family. In terms of assembly, homodimer. [4Fe-4S] cluster serves as cofactor. In terms of processing, the reversible ADP-ribosylation of Arg-101 inactivates the nitrogenase reductase and regulates nitrogenase activity.

It catalyses the reaction N2 + 8 reduced [2Fe-2S]-[ferredoxin] + 16 ATP + 16 H2O = H2 + 8 oxidized [2Fe-2S]-[ferredoxin] + 2 NH4(+) + 16 ADP + 16 phosphate + 6 H(+). The key enzymatic reactions in nitrogen fixation are catalyzed by the nitrogenase complex, which has 2 components: the iron protein and the molybdenum-iron protein. This is Nitrogenase iron protein 1 (nifH1) from Methanobacterium ivanovii.